Reading from the N-terminus, the 551-residue chain is MIAYIFLALFTIAAVIFIVNSHYRWTYFFAITLFTFLFGGMLMVSSQWQRALNFSSVLFVVLMLFHRLKIHYYKQPLLISDFFLVVDWRNWETLIHYKGALFGVIGLLALLGYAIFGFNDVESLGVLGNSIGALLFIVSFSLMWHYSKNPSAVQVWLDSLPDDGRDVFLNLPMSCRGIFFKVPNFDGNSQNFIEKMTALSSDANNLSETKPDIVVTLMESTLNPHQFAFSQQSIPPLSMFEPQNDTVFASPLRVHTFAGATWKSEFAFLAGVPSTDFGALASGVFYSVVPHLQSGLVKNLKAQGYFCVALSPFTKGNYNAKSAYDHFGFDLMLQPQDLGYPAPISKNLWDISSEEMMKYTRMILEKQHPALENVDQPMFVYVLTMREHGPYELGMENTFNLQMPNLGAKSISALNDYTQRIVALNDAIEGINNYLHERKKPFVLGYFGDHQVAFDNAIPPKKGDYAQPDYVTQFVVRSNCASQFKQEQKFLDLAFAGGVLMNVAGLSAEDEFMKANMAMCKLSDGKLEDSSDIQLLNNYRHYLYQTLAIAR.

A run of 6 helical transmembrane segments spans residues 1–21 (MIAY…IVNS), 25–45 (WTYF…LMVS), 99–119 (GALF…FGFN), 124–144 (LGVL…SLMW), 266–286 (FAFL…GVFY), and 490–510 (FLDL…SAED).

It is found in the cell membrane. This is an uncharacterized protein from Haemophilus influenzae (strain ATCC 51907 / DSM 11121 / KW20 / Rd).